The chain runs to 455 residues: Protein png1 (455 aa).

The disordered stretch occupies residues 1–110; the sequence is MTDGRQQHTR…LPVFPSPPRD (110 aa). Over residues 38 to 53 the composition is skewed to low complexity; it reads SLQEQSRSRSRTQSPS. Residues 59-73 are compositionally biased toward pro residues; the sequence is HTPPHPSRAPPPPPT. Residues 74 to 98 are compositionally biased toward low complexity; the sequence is GAHYPSSQSPSQQHQQHQLPASSSL. Cysteine 199, cysteine 202, cysteine 231, and cysteine 236 together coordinate Zn(2+). Residues 408–455 are disordered; that stretch reads NLIPREQTSGRPGEQKTPASMQDTPVDWVAAQQMGPGQSGPDRSQDGR.

It belongs to the transglutaminase-like superfamily. PNGase family.

This is Protein png1 (png1) from Aspergillus fumigatus (strain ATCC MYA-4609 / CBS 101355 / FGSC A1100 / Af293) (Neosartorya fumigata).